A 140-amino-acid chain; its full sequence is FK506-binding protein 2 (140 aa).

The signal sequence occupies residues 1–19 (MKFTTGLSVLLFFVLQVFA). Residues 43–132 (GDVVSVHYTG…IFETELVDIQ (90 aa)) enclose the PPIase FKBP-type domain.

The protein belongs to the FKBP-type PPIase family. FKBP2 subfamily.

Its subcellular location is the endoplasmic reticulum. It catalyses the reaction [protein]-peptidylproline (omega=180) = [protein]-peptidylproline (omega=0). With respect to regulation, inhibited by both FK506 and rapamycin. In terms of biological role, PPIases accelerate the folding of proteins. It catalyzes the cis-trans isomerization of proline imidic peptide bonds in oligopeptides. The polypeptide is FK506-binding protein 2 (FPR2) (Kluyveromyces lactis (strain ATCC 8585 / CBS 2359 / DSM 70799 / NBRC 1267 / NRRL Y-1140 / WM37) (Yeast)).